We begin with the raw amino-acid sequence, 97 residues long: Down syndrome critical region protein 8 (97 aa).

As to expression, expressed in numerous tissues; not found in breast, heart, small intestine and liver. Isoform 1: Predominantly expressed in the testis. Isoform 3: Predominantly expressed in the testis, at lower level in the placenta, during malignant progression of melanocytic tumors and in several tumors of varying origins. Isoform 4: Predominantly expressed in the testis, at lower level in the placenta, during malignant progression of melanocytic tumors and in several tumors of varying origins. Isoform 5: Predominantly expressed in the testis. Isoform 6: Predominantly expressed in the testis.

This Homo sapiens (Human) protein is Down syndrome critical region protein 8.